Consider the following 272-residue polypeptide: MDKYAVIGNPVEHSLSPVIFQAFEKQTNHSFDYLKIKAPVNGFAAAVKKFHDEGGKGANITLPFKEEAYQLADKRCQEANEAHAASALQFREDGTIYAVNYDGLGLVQDLTRNHNITLTQKSILIVGAGGATRGILGPLLNAAPEKIVIVNRTPSKAHALAKIFHLRGEIQGGGFDELEPMRYDVIIHATSLGHQGKFPPLPDGLVGSQSCCYDLSYGKIASPFLQWAKDQGAKYNFDGLGMLVEHNAAVFYLWFGIYPDTNPVIEMLQAHL.

Residues 14–16 and threonine 61 contribute to the shikimate site; that span reads SLS. Lysine 65 serves as the catalytic Proton acceptor. Aspartate 102 provides a ligand contact to shikimate. Residues 127-131, 151-156, and leucine 215 contribute to the NADP(+) site; these read GAGGA and NRTPSK. Tyrosine 217 is a shikimate binding site. Glycine 239 is a binding site for NADP(+).

The protein belongs to the shikimate dehydrogenase family. As to quaternary structure, homodimer.

It catalyses the reaction shikimate + NADP(+) = 3-dehydroshikimate + NADPH + H(+). The protein operates within metabolic intermediate biosynthesis; chorismate biosynthesis; chorismate from D-erythrose 4-phosphate and phosphoenolpyruvate: step 4/7. Functionally, involved in the biosynthesis of the chorismate, which leads to the biosynthesis of aromatic amino acids. Catalyzes the reversible NADPH linked reduction of 3-dehydroshikimate (DHSA) to yield shikimate (SA). This Coxiella burnetii (strain CbuK_Q154) (Coxiella burnetii (strain Q154)) protein is Shikimate dehydrogenase (NADP(+)).